We begin with the raw amino-acid sequence, 220 residues long: Ribose-5-phosphate isomerase A (220 aa).

Residues Thr28–Thr31, Asp81–Asp84, and Lys94–Gly97 each bind substrate. The active-site Proton acceptor is Glu103. Position 121 (Lys121) interacts with substrate.

It belongs to the ribose 5-phosphate isomerase family. Homodimer.

The catalysed reaction is aldehydo-D-ribose 5-phosphate = D-ribulose 5-phosphate. Its pathway is carbohydrate degradation; pentose phosphate pathway; D-ribose 5-phosphate from D-ribulose 5-phosphate (non-oxidative stage): step 1/1. Its function is as follows. Catalyzes the reversible conversion of ribose-5-phosphate to ribulose 5-phosphate. The chain is Ribose-5-phosphate isomerase A from Shewanella sp. (strain W3-18-1).